The primary structure comprises 84 residues: MYB-like transcription factor TCL1 (84 aa).

Residues Thr36–Trp73 form the Myb-like domain.

In terms of tissue distribution, expressed in inflorescences and trichomes of rosette and cauline leaves.

It localises to the nucleus. MYB-type transcription factor involved in trichome cell specification. Acts as a negative regulator of trichome patterning and formation by direct binding to the cis-acting regulatory elements of GL1, thus suppressing the expression of GL1. This chain is MYB-like transcription factor TCL1 (TCL1), found in Arabidopsis thaliana (Mouse-ear cress).